Here is a 211-residue protein sequence, read N- to C-terminus: Thiamine-phosphate synthase (211 aa).

4-amino-2-methyl-5-(diphosphooxymethyl)pyrimidine-binding positions include 37–41 (QLREK) and Asn69. Residues Asp70 and Glu89 each contribute to the Mg(2+) site. Ser108 contacts 4-amino-2-methyl-5-(diphosphooxymethyl)pyrimidine. A 2-[(2R,5Z)-2-carboxy-4-methylthiazol-5(2H)-ylidene]ethyl phosphate-binding site is contributed by 134 to 136 (TTT). 4-amino-2-methyl-5-(diphosphooxymethyl)pyrimidine is bound at residue Lys137. 2-[(2R,5Z)-2-carboxy-4-methylthiazol-5(2H)-ylidene]ethyl phosphate is bound by residues Gly163 and 183–184 (VS).

This sequence belongs to the thiamine-phosphate synthase family. Requires Mg(2+) as cofactor.

It catalyses the reaction 2-[(2R,5Z)-2-carboxy-4-methylthiazol-5(2H)-ylidene]ethyl phosphate + 4-amino-2-methyl-5-(diphosphooxymethyl)pyrimidine + 2 H(+) = thiamine phosphate + CO2 + diphosphate. The enzyme catalyses 2-(2-carboxy-4-methylthiazol-5-yl)ethyl phosphate + 4-amino-2-methyl-5-(diphosphooxymethyl)pyrimidine + 2 H(+) = thiamine phosphate + CO2 + diphosphate. It carries out the reaction 4-methyl-5-(2-phosphooxyethyl)-thiazole + 4-amino-2-methyl-5-(diphosphooxymethyl)pyrimidine + H(+) = thiamine phosphate + diphosphate. Its pathway is cofactor biosynthesis; thiamine diphosphate biosynthesis; thiamine phosphate from 4-amino-2-methyl-5-diphosphomethylpyrimidine and 4-methyl-5-(2-phosphoethyl)-thiazole: step 1/1. Its function is as follows. Condenses 4-methyl-5-(beta-hydroxyethyl)thiazole monophosphate (THZ-P) and 2-methyl-4-amino-5-hydroxymethyl pyrimidine pyrophosphate (HMP-PP) to form thiamine monophosphate (TMP). The protein is Thiamine-phosphate synthase of Enterococcus faecalis (strain ATCC 700802 / V583).